Here is a 723-residue protein sequence, read N- to C-terminus: Threonine--tRNA ligase 1, cytoplasmic (723 aa).

Residues 1 to 46 (MFEEKASSPSGKMGGEEKPIGAGEEKQKEGGKKKNKEGSGDGGRAE) form a disordered region. Residues 14–39 (GGEEKPIGAGEEKQKEGGKKKNKEGS) are compositionally biased toward basic and acidic residues. Ser-39 carries the post-translational modification Phosphoserine. The TGS domain maps to 79-143 (DSKPIKVTLP…EEDCTLELLK (65 aa)). At Lys-243 the chain carries N6-acetyllysine. Thr-246 carries the post-translational modification Phosphothreonine. Tyr-298 carries the post-translational modification Phosphotyrosine. Thr-453 carries the post-translational modification Phosphothreonine. Ser-702 carries the phosphoserine modification.

It belongs to the class-II aminoacyl-tRNA synthetase family. As to quaternary structure, homodimer. Post-translationally, ISGylated.

Its subcellular location is the cytoplasm. It catalyses the reaction tRNA(Thr) + L-threonine + ATP = L-threonyl-tRNA(Thr) + AMP + diphosphate + H(+). With respect to regulation, inhibited by borrelidin (BN, IC 50 is 7 nM), which binds to 4 distinct subsites in the protein, preventing binding of all 3 substrates. Catalyzes the attachment of threonine to tRNA(Thr) in a two-step reaction: threonine is first activated by ATP to form Thr-AMP and then transferred to the acceptor end of tRNA(Thr). Also edits incorrectly charged tRNA(Thr) via its editing domain, at the post-transfer stage. The protein is Threonine--tRNA ligase 1, cytoplasmic of Homo sapiens (Human).